Reading from the N-terminus, the 283-residue chain is Ribosomal RNA small subunit methyltransferase A (283 aa).

S-adenosyl-L-methionine-binding residues include Asn22, Leu24, Gly49, Glu70, and Asn113.

This sequence belongs to the class I-like SAM-binding methyltransferase superfamily. rRNA adenine N(6)-methyltransferase family. RsmA subfamily.

The protein resides in the cytoplasm. The enzyme catalyses adenosine(1518)/adenosine(1519) in 16S rRNA + 4 S-adenosyl-L-methionine = N(6)-dimethyladenosine(1518)/N(6)-dimethyladenosine(1519) in 16S rRNA + 4 S-adenosyl-L-homocysteine + 4 H(+). Specifically dimethylates two adjacent adenosines (A1518 and A1519) in the loop of a conserved hairpin near the 3'-end of 16S rRNA in the 30S particle. May play a critical role in biogenesis of 30S subunits. This Myxococcus xanthus (strain DK1622) protein is Ribosomal RNA small subunit methyltransferase A.